The following is a 289-amino-acid chain: ATP synthase gamma chain (289 aa).

This sequence belongs to the ATPase gamma chain family. F-type ATPases have 2 components, CF(1) - the catalytic core - and CF(0) - the membrane proton channel. CF(1) has five subunits: alpha(3), beta(3), gamma(1), delta(1), epsilon(1). CF(0) has three main subunits: a, b and c.

Its subcellular location is the cell inner membrane. Its function is as follows. Produces ATP from ADP in the presence of a proton gradient across the membrane. The gamma chain is believed to be important in regulating ATPase activity and the flow of protons through the CF(0) complex. In Pasteurella multocida (strain Pm70), this protein is ATP synthase gamma chain.